The primary structure comprises 358 residues: Chorismate synthase (358 aa).

Arg-47 is an NADP(+) binding site. FMN contacts are provided by residues Arg-124 to Ser-126, Asn-240 to Ala-241, Gly-284, Lys-299 to Thr-303, and Arg-325.

Belongs to the chorismate synthase family. In terms of assembly, homotetramer. The cofactor is FMNH2.

It carries out the reaction 5-O-(1-carboxyvinyl)-3-phosphoshikimate = chorismate + phosphate. The protein operates within metabolic intermediate biosynthesis; chorismate biosynthesis; chorismate from D-erythrose 4-phosphate and phosphoenolpyruvate: step 7/7. Functionally, catalyzes the anti-1,4-elimination of the C-3 phosphate and the C-6 proR hydrogen from 5-enolpyruvylshikimate-3-phosphate (EPSP) to yield chorismate, which is the branch point compound that serves as the starting substrate for the three terminal pathways of aromatic amino acid biosynthesis. This reaction introduces a second double bond into the aromatic ring system. The polypeptide is Chorismate synthase (Bacteroides fragilis (strain YCH46)).